The sequence spans 716 residues: MHKDEIQNLTALEAASELEWLAKEITRHDVLYNRNDQPEISDAEYDALRRRNAEIEALFPELIRPDSPSHKIGAPISEKFEKSVHSQPMLSLDNAFSSEDVSEFMERVRRFLRLPETQMLEITAEPKIDGLSLSLRYEQGRLVCAATRGDGYVGENVTANARTISDIPQVLQGKFPDIIEVRGEVYMRRADFQALNVNQQEKGKLAFANPRNAAAGSLRQLDSRITASRKLQFFAYACGEVSEIFAESQMGMMEKLKEYGFVINPLIKKIKSLEELISYYHDIEERRHALSYDIDGIVYKVNDLMLQMRLGFVSRSPRWAIAHKFPAEKAMTVLEGIDIQVGRTGALTPVARLAPITVGGVVITNASLHNEDYIKGIGSKGEPIREGNDIRVGDTVIVQRAGDVIPQIIDIVAEKRSKDASAFVFPYLCPACGSYAVREIGEAVRRCTGGLICPAQAIERIRHFVSRNAFDIEGLGKKQVEFFFQIQDETLCIHTPADIFTLQRRQEKSLVHLENMEGFGTVSVRKLYDAINARRKIPLSRFLFALGIRYVGEVNARRLARAYQNYTAFETAAMAATMPDDKVGKEGNEAWMELTNIEGIGPQVGEAIIDFYKEVHNREVLSGLLCEVTPLDEESVMTASSPIAGKIIVFTGTLTRMSRDEAKALAERLGAKTSGSLSKKTNLLVAGVGGGSKLTKAQELGVEVIDEEAWLQLIEG.

NAD(+)-binding positions include 42–46 (DAEYD), 91–92 (SL), and glutamate 125. Lysine 127 serves as the catalytic N6-AMP-lysine intermediate. 4 residues coordinate NAD(+): arginine 148, glutamate 184, lysine 300, and lysine 324. 4 residues coordinate Zn(2+): cysteine 429, cysteine 432, cysteine 447, and cysteine 453. The BRCT domain occupies 638–716 (TASSPIAGKI…EEAWLQLIEG (79 aa)).

This sequence belongs to the NAD-dependent DNA ligase family. LigA subfamily. Requires Mg(2+) as cofactor. Mn(2+) serves as cofactor.

The catalysed reaction is NAD(+) + (deoxyribonucleotide)n-3'-hydroxyl + 5'-phospho-(deoxyribonucleotide)m = (deoxyribonucleotide)n+m + AMP + beta-nicotinamide D-nucleotide.. DNA ligase that catalyzes the formation of phosphodiester linkages between 5'-phosphoryl and 3'-hydroxyl groups in double-stranded DNA using NAD as a coenzyme and as the energy source for the reaction. It is essential for DNA replication and repair of damaged DNA. The protein is DNA ligase of Bartonella henselae (strain ATCC 49882 / DSM 28221 / CCUG 30454 / Houston 1) (Rochalimaea henselae).